Here is a 1215-residue protein sequence, read N- to C-terminus: von Willebrand factor A domain-containing protein 5B1 (1215 aa).

A signal peptide spans 1-18 (MPGLLNCLTGAALPLMES). Residues 19–141 (DVTSYVSGYA…NVTVFISTSS (123 aa)) enclose the VIT domain. Asn-132 carries an N-linked (GlcNAc...) asparagine glycan. Residues 353–532 (EFIFLIDRSN…KAMAPVLSDV (180 aa)) enclose the VWFA domain. The segment at 595–674 (SVFYPSQDEG…DPTGTARRYP (80 aa)) is disordered. Polar residues-rich tracts occupy residues 608-621 (GSGN…QGQT) and 646-667 (YSTN…SDPT). Residue Tyr-879 is modified to Phosphotyrosine. Disordered stretches follow at residues 934–953 (GSSA…SSAA), 964–999 (QDSP…APSS), and 1100–1121 (SPQD…SLKS). 3 stretches are compositionally biased toward polar residues: residues 964-975 (QDSPTSTFNKTP), 990-999 (QNLSASAPSS), and 1100-1112 (SPQD…SSPP).

The protein resides in the secreted. The sequence is that of von Willebrand factor A domain-containing protein 5B1 (Vwa5b1) from Mus musculus (Mouse).